The following is a 657-amino-acid chain: Chemoreceptor McpA (657 aa).

The Cytoplasmic portion of the chain corresponds to 1-5 (MKRIR). A helical transmembrane segment spans residues 6–29 (LVDLPLIIKIGFAPAFALLMLAVM). The Periplasmic segment spans residues 30 to 188 (AGGAILVQKS…ESESAKRQAQ (159 aa)). A helical membrane pass occupies residues 189–212 (ATAAMSVTIIMSLLTLGAVGALAF). Residues 213–657 (LTVMTTRKSI…APASDGWEEF (445 aa)) are Cytoplasmic-facing. HAMP domains lie at 216-269 (MTTR…HLEQ) and 297-349 (QEAS…ETMK). The region spanning 354–583 (STDGLSTGAD…QSTAATHSLK (230 aa)) is the Methyl-accepting transducer domain. A Glutamate methyl ester (Gln) modification is found at glutamine 378. Glutamate methyl ester (Glu) is present on residues glutamate 385 and glutamate 392. Position 574 is a glutamate methyl ester (Gln) (glutamine 574). The interval 634–657 (ARPGRSSGSAALAQAPASDGWEEF) is disordered.

This sequence belongs to the methyl-accepting chemotaxis (MCP) protein family.

It localises to the cell membrane. Functionally, chemotactic-signal transducers respond to changes in the concentration of attractants and repellents in the environment, transduce a signal from the outside to the inside of the cell, and facilitate sensory adaptation through the variation of the level of methylation. Attractants increase the level of methylation while repellents decrease the level of methylation. The polypeptide is Chemoreceptor McpA (mcpA) (Caulobacter vibrioides (strain ATCC 19089 / CIP 103742 / CB 15) (Caulobacter crescentus)).